The sequence spans 247 residues: NAD(P)H-quinone oxidoreductase subunit K (247 aa).

[4Fe-4S] cluster contacts are provided by C63, C64, C128, and C159.

Belongs to the complex I 20 kDa subunit family. NDH-1 can be composed of about 15 different subunits; different subcomplexes with different compositions have been identified which probably have different functions. It depends on [4Fe-4S] cluster as a cofactor.

The protein localises to the cellular thylakoid membrane. It carries out the reaction a plastoquinone + NADH + (n+1) H(+)(in) = a plastoquinol + NAD(+) + n H(+)(out). The catalysed reaction is a plastoquinone + NADPH + (n+1) H(+)(in) = a plastoquinol + NADP(+) + n H(+)(out). Functionally, NDH-1 shuttles electrons from an unknown electron donor, via FMN and iron-sulfur (Fe-S) centers, to quinones in the respiratory and/or the photosynthetic chain. The immediate electron acceptor for the enzyme in this species is believed to be plastoquinone. Couples the redox reaction to proton translocation, and thus conserves the redox energy in a proton gradient. Cyanobacterial NDH-1 also plays a role in inorganic carbon-concentration. The chain is NAD(P)H-quinone oxidoreductase subunit K from Gloeothece citriformis (strain PCC 7424) (Cyanothece sp. (strain PCC 7424)).